The chain runs to 61 residues: Short neurotoxin 1 (61 aa).

Cystine bridges form between Cys-3–Cys-23, Cys-17–Cys-40, Cys-42–Cys-53, and Cys-54–Cys-59.

Belongs to the three-finger toxin family. Short-chain subfamily. Type I alpha-neurotoxin sub-subfamily. In terms of tissue distribution, expressed by the venom gland.

The protein resides in the secreted. Its function is as follows. Binds to muscle nicotinic acetylcholine receptor (nAChR) and inhibit acetylcholine from binding to the receptor, thereby impairing neuromuscular transmission. Functionally, produces peripheral paralysis by blocking neuromuscular transmission at the postsynaptic site. Binds to the muscular nicotinic acetylcholine receptor. The protein is Short neurotoxin 1 of Naja annulifera (Banded Egyptian cobra).